We begin with the raw amino-acid sequence, 272 residues long: 3-methyl-2-oxobutanoate hydroxymethyltransferase (272 aa).

Positions 43 and 82 each coordinate Mg(2+). 3-methyl-2-oxobutanoate-binding positions include 43–44 (DS), D82, and K112. E114 serves as a coordination point for Mg(2+). E179 functions as the Proton acceptor in the catalytic mechanism.

Belongs to the PanB family. In terms of assembly, homodecamer; pentamer of dimers. Mg(2+) is required as a cofactor.

The protein localises to the cytoplasm. The enzyme catalyses 3-methyl-2-oxobutanoate + (6R)-5,10-methylene-5,6,7,8-tetrahydrofolate + H2O = 2-dehydropantoate + (6S)-5,6,7,8-tetrahydrofolate. Its pathway is cofactor biosynthesis; (R)-pantothenate biosynthesis; (R)-pantoate from 3-methyl-2-oxobutanoate: step 1/2. Catalyzes the reversible reaction in which hydroxymethyl group from 5,10-methylenetetrahydrofolate is transferred onto alpha-ketoisovalerate to form ketopantoate. This is 3-methyl-2-oxobutanoate hydroxymethyltransferase from Staphylococcus aureus (strain COL).